We begin with the raw amino-acid sequence, 702 residues long: Ribosomal RNA large subunit methyltransferase K/L (702 aa).

Residues 43–154 (LVYQSLMWSR…KETASIALDL (112 aa)) form the THUMP domain.

The protein belongs to the methyltransferase superfamily. RlmKL family.

The protein localises to the cytoplasm. The catalysed reaction is guanosine(2445) in 23S rRNA + S-adenosyl-L-methionine = N(2)-methylguanosine(2445) in 23S rRNA + S-adenosyl-L-homocysteine + H(+). It catalyses the reaction guanosine(2069) in 23S rRNA + S-adenosyl-L-methionine = N(2)-methylguanosine(2069) in 23S rRNA + S-adenosyl-L-homocysteine + H(+). Its function is as follows. Specifically methylates the guanine in position 2445 (m2G2445) and the guanine in position 2069 (m7G2069) of 23S rRNA. The sequence is that of Ribosomal RNA large subunit methyltransferase K/L from Escherichia coli (strain SMS-3-5 / SECEC).